Here is a 521-residue protein sequence, read N- to C-terminus: Proactivator polypeptide-like 1 (521 aa).

Residues 1 to 17 (MLCALLLLPSLLGATRA) form the signal peptide. A propeptide spanning residues 18-59 (SPTSGPQECAKGSTVWCQDLQTAARCGAVGYCQGAVWNKPTA) is cleaved from the precursor. The Saposin A-type 1 domain occupies 19–59 (PTSGPQECAKGSTVWCQDLQTAARCGAVGYCQGAVWNKPTA). Saposin B-type domains follow at residues 60-144 (KSLP…EPLQ) and 180-258 (EGAL…EELG). 3 disulfide bridges follow: Cys64/Cys140, Cys67/Cys134, and Cys95/Cys107. A propeptide spanning residues 146–180 (HLATLRPLSKEDTFEAVAPFMANGPLTFHPRQAPE) is cleaved from the precursor. Disulfide bonds link Cys184-Cys254, Cys187-Cys248, and Cys213-Cys224. Asn201 carries an N-linked (GlcNAc...) asparagine glycan. Positions 259–288 (APARLTQVVAMDGVPSLELGLPRKQSEMQM) are excised as a propeptide. Saposin B-type domains follow at residues 290–370 (AGVT…GNRR) and 392–473 (QGSF…HGPR). Cystine bridges form between Cys294/Cys366, Cys297/Cys360, and Cys325/Cys336. A glycan (N-linked (GlcNAc...) asparagine) is linked at Asn311. The propeptide occupies 370-391 (RRARAVHDAYAIVPSPEWDAEN). 3 cysteine pairs are disulfide-bonded: Cys396–Cys469, Cys399–Cys463, and Cys427–Cys438. The propeptide occupies 474–521 (TPLLGTDQCALGPSFWCRSQEAAKLCNAVQHCQKHVWKEMHLHAGEHA). In terms of domain architecture, Saposin A-type 2 spans 475-515 (PLLGTDQCALGPSFWCRSQEAAKLCNAVQHCQKHVWKEMHL).

Its subcellular location is the secreted. Its function is as follows. May activate the lysosomal degradation of sphingolipids. The protein is Proactivator polypeptide-like 1 (PSAPL1) of Homo sapiens (Human).